Here is a 123-residue protein sequence, read N- to C-terminus: UPF0102 protein PFL_5073 (123 aa).

The protein belongs to the UPF0102 family.

The sequence is that of UPF0102 protein PFL_5073 from Pseudomonas fluorescens (strain ATCC BAA-477 / NRRL B-23932 / Pf-5).